The following is a 336-amino-acid chain: tRNA N6-adenosine threonylcarbamoyltransferase (336 aa).

Fe cation is bound by residues His-112 and His-116. Residues 136 to 140 (LVSGG), Asp-169, Gly-182, and Asn-276 contribute to the substrate site. Fe cation is bound at residue Asp-304.

The protein belongs to the KAE1 / TsaD family. Fe(2+) is required as a cofactor.

It localises to the cytoplasm. The catalysed reaction is L-threonylcarbamoyladenylate + adenosine(37) in tRNA = N(6)-L-threonylcarbamoyladenosine(37) in tRNA + AMP + H(+). Its function is as follows. Required for the formation of a threonylcarbamoyl group on adenosine at position 37 (t(6)A37) in tRNAs that read codons beginning with adenine. Is involved in the transfer of the threonylcarbamoyl moiety of threonylcarbamoyl-AMP (TC-AMP) to the N6 group of A37, together with TsaE and TsaB. TsaD likely plays a direct catalytic role in this reaction. The polypeptide is tRNA N6-adenosine threonylcarbamoyltransferase (Francisella tularensis subsp. novicida (strain U112)).